A 178-amino-acid polypeptide reads, in one-letter code: Alkyl hydroperoxide reductase AhpD (178 aa).

Catalysis depends on C131, which acts as the Proton donor. C131 and C134 form a disulfide bridge. Residue C134 is the Cysteine sulfenic acid (-SOH) intermediate of the active site.

It belongs to the AhpD family.

The enzyme catalyses N(6)-[(R)-dihydrolipoyl]-L-lysyl-[lipoyl-carrier protein] + a hydroperoxide = N(6)-[(R)-lipoyl]-L-lysyl-[lipoyl-carrier protein] + an alcohol + H2O. In terms of biological role, antioxidant protein with alkyl hydroperoxidase activity. Required for the reduction of the AhpC active site cysteine residues and for the regeneration of the AhpC enzyme activity. The protein is Alkyl hydroperoxide reductase AhpD of Methylocella silvestris (strain DSM 15510 / CIP 108128 / LMG 27833 / NCIMB 13906 / BL2).